The following is a 122-amino-acid chain: Large ribosomal subunit protein uL14 (122 aa).

Belongs to the universal ribosomal protein uL14 family. Part of the 50S ribosomal subunit. Forms a cluster with proteins L3 and L19. In the 70S ribosome, L14 and L19 interact and together make contacts with the 16S rRNA in bridges B5 and B8.

Binds to 23S rRNA. Forms part of two intersubunit bridges in the 70S ribosome. This chain is Large ribosomal subunit protein uL14, found in Chlorobium luteolum (strain DSM 273 / BCRC 81028 / 2530) (Pelodictyon luteolum).